Reading from the N-terminus, the 149-residue chain is Nucleoside diphosphate kinase (149 aa).

ATP-binding residues include Lys-9, Phe-57, Arg-85, Thr-91, Arg-102, and Asn-112. The Pros-phosphohistidine intermediate role is filled by His-115.

This sequence belongs to the NDK family. The cofactor is Mg(2+).

It localises to the cytoplasm. The catalysed reaction is a 2'-deoxyribonucleoside 5'-diphosphate + ATP = a 2'-deoxyribonucleoside 5'-triphosphate + ADP. It carries out the reaction a ribonucleoside 5'-diphosphate + ATP = a ribonucleoside 5'-triphosphate + ADP. Functionally, major role in the synthesis of nucleoside triphosphates other than ATP. The ATP gamma phosphate is transferred to the NDP beta phosphate via a ping-pong mechanism, using a phosphorylated active-site intermediate. The protein is Nucleoside diphosphate kinase of Methanosarcina barkeri (strain Fusaro / DSM 804).